The sequence spans 364 residues: GMP reductase (364 aa).

Residues 26–27 (SR), Lys78, 132–134 (DVA), and 183–184 (IG) each bind NADP(+). Residues Gly184, Gly186, and Cys189 each coordinate K(+). The active-site Thioimidate intermediate is the Cys189. The active-site Proton donor/acceptor is Thr191. A K(+)-binding site is contributed by Arg192. GMP-binding positions include 222 to 224 (DGG), 245 to 246 (GG), 271 to 273 (GMS), and 289 to 293 (RASEG). Residues Met272, 288 to 289 (YR), and 317 to 320 (SACT) each bind NADP(+).

It belongs to the IMPDH/GMPR family. GuaC type 1 subfamily. Homotetramer.

It catalyses the reaction IMP + NH4(+) + NADP(+) = GMP + NADPH + 2 H(+). Catalyzes the irreversible NADPH-dependent deamination of GMP to IMP. It functions in the conversion of nucleobase, nucleoside and nucleotide derivatives of G to A nucleotides, and in maintaining the intracellular balance of A and G nucleotides. This chain is GMP reductase (gmr-1), found in Onchocerca volvulus.